We begin with the raw amino-acid sequence, 269 residues long: Trans-aconitate 2-methyltransferase (269 aa).

It belongs to the methyltransferase superfamily. Tam family.

The protein localises to the cytoplasm. It catalyses the reaction trans-aconitate + S-adenosyl-L-methionine = (E)-3-(methoxycarbonyl)pent-2-enedioate + S-adenosyl-L-homocysteine. In terms of biological role, catalyzes the S-adenosylmethionine monomethyl esterification of trans-aconitate. The protein is Trans-aconitate 2-methyltransferase of Streptomyces avermitilis (strain ATCC 31267 / DSM 46492 / JCM 5070 / NBRC 14893 / NCIMB 12804 / NRRL 8165 / MA-4680).